The sequence spans 968 residues: RNA polymerase-associated protein RapA (968 aa).

Residues D164–N334 enclose the Helicase ATP-binding domain. Residue D177–T184 coordinates ATP. The DEAH box motif lies at D280–H283. A Helicase C-terminal domain is found at R490–G662.

This sequence belongs to the SNF2/RAD54 helicase family. RapA subfamily. Interacts with the RNAP. Has a higher affinity for the core RNAP than for the holoenzyme. Its ATPase activity is stimulated by binding to RNAP.

Its function is as follows. Transcription regulator that activates transcription by stimulating RNA polymerase (RNAP) recycling in case of stress conditions such as supercoiled DNA or high salt concentrations. Probably acts by releasing the RNAP, when it is trapped or immobilized on tightly supercoiled DNA. Does not activate transcription on linear DNA. Probably not involved in DNA repair. The protein is RNA polymerase-associated protein RapA of Cronobacter sakazakii (strain ATCC BAA-894) (Enterobacter sakazakii).